The primary structure comprises 362 residues: MRVTAPRTLLLLLSAALALTETWAGSHSMRYFDTAVSRPGRGEPRFITVGYVDDTQFVRFDSDAASPRMEPRAPWIEQEGPEYWDRETQTSKAQAQTDRENLRIALRYYNQSEAGSHTIQRMFGCDVGPDGRLLRGYSQSAYDGKDYIALNEDLSSWTAADTAAQITQRKWEAAREAEQLRAYLEGTCVEWLRRYLENGRETLQRADTPKTHVTHHPISDHEATLRCWALGFYPAEITLTWQRDGEDQTQDTELVETRPAGDGTFQKWAAVVVPSGEEERYTCHVQHEGLPKPLTLRWEPSSQSTIPIVGIVAGLAVLAVVVIGAVVTAVICRRKSSGGKGGSYSQAASSDSAQGSDVSLTA.

The first 24 residues, 1–24, serve as a signal peptide directing secretion; sequence MRVTAPRTLLLLLSAALALTETWA. The tract at residues 25–114 is alpha-1; sequence GSHSMRYFDT…ALRYYNQSEA (90 aa). Over 25-308 the chain is Extracellular; sequence GSHSMRYFDT…EPSSQSTIPI (284 aa). An N-linked (GlcNAc...) asparagine glycan is attached at Asn-110. The interval 115–206 is alpha-2; that stretch reads GSHTIQRMFG…ENGRETLQRA (92 aa). Intrachain disulfides connect Cys-125-Cys-188 and Cys-227-Cys-283. Positions 207-298 are alpha-3; sequence DTPKTHVTHH…GLPKPLTLRW (92 aa). Residues 209–295 enclose the Ig-like C1-type domain; it reads PKTHVTHHPI…QHEGLPKPLT (87 aa). The tract at residues 299–308 is connecting peptide; sequence EPSSQSTIPI. Residues 309–332 traverse the membrane as a helical segment; that stretch reads VGIVAGLAVLAVVVIGAVVTAVIC. The Cytoplasmic segment spans residues 333–362; the sequence is RRKSSGGKGGSYSQAASSDSAQGSDVSLTA. Residues 335-362 are disordered; the sequence is KSSGGKGGSYSQAASSDSAQGSDVSLTA. The span at 343–362 shows a compositional bias: low complexity; it reads SYSQAASSDSAQGSDVSLTA. 2 positions are modified to phosphoserine: Ser-356 and Ser-359.

The protein belongs to the MHC class I family. In terms of assembly, heterodimer of an alpha chain and a beta chain (beta-2-microglobulin).

The protein resides in the membrane. Functionally, involved in the presentation of foreign antigens to the immune system. The sequence is that of Class I histocompatibility antigen, Gogo-B*0101 alpha chain from Gorilla gorilla gorilla (Western lowland gorilla).